The sequence spans 456 residues: Chromosomal replication initiator protein DnaA (456 aa).

Positions 1–79 are domain I, interacts with DnaA modulators; it reads MSQEIWADVL…QHPQVSFQVL (79 aa). Residues 79 to 112 form a domain II region; the sequence is LPASQDALLLPSDPPPAPISPGRAPAPPPADNRK. Residues 89 to 112 are disordered; the sequence is PSDPPPAPISPGRAPAPPPADNRK. Residues 90 to 108 show a composition bias toward pro residues; the sequence is SDPPPAPISPGRAPAPPPA. A domain III, AAA+ region region spans residues 113-329; that stretch reads TLNPKYTFEN…GALMRVVAFS (217 aa). 4 residues coordinate ATP: Gly157, Gly159, Lys160, and Thr161. The interval 330-456 is domain IV, binds dsDNA; sequence SLNNVPFSRA…KGLEDEDSRA (127 aa).

The protein belongs to the DnaA family. As to quaternary structure, oligomerizes as a right-handed, spiral filament on DNA at oriC.

It localises to the cytoplasm. Plays an essential role in the initiation and regulation of chromosomal replication. ATP-DnaA binds to the origin of replication (oriC) to initiate formation of the DNA replication initiation complex once per cell cycle. Binds the DnaA box (a 9 base pair repeat at the origin) and separates the double-stranded (ds)DNA. Forms a right-handed helical filament on oriC DNA; dsDNA binds to the exterior of the filament while single-stranded (ss)DNA is stabiized in the filament's interior. The ATP-DnaA-oriC complex binds and stabilizes one strand of the AT-rich DNA unwinding element (DUE), permitting loading of DNA polymerase. After initiation quickly degrades to an ADP-DnaA complex that is not apt for DNA replication. Binds acidic phospholipids. This chain is Chromosomal replication initiator protein DnaA, found in Deinococcus deserti (strain DSM 17065 / CIP 109153 / LMG 22923 / VCD115).